The chain runs to 158 residues: SsrA-binding protein (158 aa).

Belongs to the SmpB family.

Its subcellular location is the cytoplasm. In terms of biological role, required for rescue of stalled ribosomes mediated by trans-translation. Binds to transfer-messenger RNA (tmRNA), required for stable association of tmRNA with ribosomes. tmRNA and SmpB together mimic tRNA shape, replacing the anticodon stem-loop with SmpB. tmRNA is encoded by the ssrA gene; the 2 termini fold to resemble tRNA(Ala) and it encodes a 'tag peptide', a short internal open reading frame. During trans-translation Ala-aminoacylated tmRNA acts like a tRNA, entering the A-site of stalled ribosomes, displacing the stalled mRNA. The ribosome then switches to translate the ORF on the tmRNA; the nascent peptide is terminated with the 'tag peptide' encoded by the tmRNA and targeted for degradation. The ribosome is freed to recommence translation, which seems to be the essential function of trans-translation. The protein is SsrA-binding protein of Bartonella tribocorum (strain CIP 105476 / IBS 506).